Consider the following 157-residue polypeptide: Protein Smg homolog (157 aa).

It belongs to the Smg family.

In Aeromonas salmonicida (strain A449), this protein is Protein Smg homolog.